Reading from the N-terminus, the 71-residue chain is DNA-directed RNA polymerases II, IV and V subunit 10 (71 aa).

The Zn(2+) site is built by Cys-7, Cys-10, Cys-44, and Cys-45.

It belongs to the archaeal Rpo10/eukaryotic RPB10 RNA polymerase subunit family. As to quaternary structure, component of the RNA polymerase II, IV and V complexes. Interacts with NRPD1.

Its subcellular location is the nucleus. Functionally, DNA-dependent RNA polymerase catalyzes the transcription of DNA into RNA using the four ribonucleoside triphosphates as substrates. Component of RNA polymerase II which synthesizes mRNA precursors and many functional non-coding RNAs. Pol II is the central component of the basal RNA polymerase II transcription machinery. It is composed of mobile elements that move relative to each other. Component of RNA polymerases IV and V which mediate short-interfering RNAs (siRNA) accumulation and subsequent RNA-directed DNA methylation-dependent (RdDM) transcriptional gene silencing (TGS) of endogenous repeated sequences, including transposable elements. The sequence is that of DNA-directed RNA polymerases II, IV and V subunit 10 (NRPB10) from Arabidopsis thaliana (Mouse-ear cress).